The sequence spans 121 residues: Immunoglobulin kappa variable 2-40 (121 aa).

The signal sequence occupies residues 1–19; it reads MRLPAQLLGLLMLWVPGSS. The Ig-like domain maps to 20 to 121; that stretch reads EDIVMTQTPL…YYCMQRIEFP (102 aa). Residues 21-43 form a framework-1 region; that stretch reads DIVMTQTPLSLPVTPGEPASISC. Cysteine 43 and cysteine 114 form a disulfide bridge. Positions 44-60 are complementarity-determining-1; that stretch reads RSSQSLLDSDDGNTYLD. Residues 61–75 are framework-2; it reads WYLQKPGQSPQLLIY. The complementarity-determining-2 stretch occupies residues 76–82; the sequence is TLSYRAS. A framework-3 region spans residues 83–114; that stretch reads GVPDRFSGSGSGTDFTLKISRVEAEDVGVYYC. The tract at residues 115 to 121 is complementarity-determining-3; sequence MQRIEFP.

Immunoglobulins are composed of two identical heavy chains and two identical light chains; disulfide-linked.

Its subcellular location is the secreted. It is found in the cell membrane. Its function is as follows. V region of the variable domain of immunoglobulin light chains that participates in the antigen recognition. Immunoglobulins, also known as antibodies, are membrane-bound or secreted glycoproteins produced by B lymphocytes. In the recognition phase of humoral immunity, the membrane-bound immunoglobulins serve as receptors which, upon binding of a specific antigen, trigger the clonal expansion and differentiation of B lymphocytes into immunoglobulins-secreting plasma cells. Secreted immunoglobulins mediate the effector phase of humoral immunity, which results in the elimination of bound antigens. The antigen binding site is formed by the variable domain of one heavy chain, together with that of its associated light chain. Thus, each immunoglobulin has two antigen binding sites with remarkable affinity for a particular antigen. The variable domains are assembled by a process called V-(D)-J rearrangement and can then be subjected to somatic hypermutations which, after exposure to antigen and selection, allow affinity maturation for a particular antigen. The chain is Immunoglobulin kappa variable 2-40 from Homo sapiens (Human).